The chain runs to 140 residues: PDZ domain-containing protein 11 (140 aa).

A PDZ domain is found at 47-129 (TVVLKKPPGA…ITMRVRYFPY (83 aa)).

It is found in the cytoplasm. The sequence is that of PDZ domain-containing protein 11 (PDZD11) from Gallus gallus (Chicken).